We begin with the raw amino-acid sequence, 200 residues long: MDVGFLSSDLFTFGLIPVLIFLARICDVSIGTIRYIMISRGFKFIAPVFGFFEVTIWLLAIGQVMANITNPICYIAYGAGFAAGTYIGMELEERMKLGMAIIRLITPLPTEDFIARLRQYGYGVTNITAQGANGEVTIIFMVVKRAKIPHLAILIRDFNPHAFYTIEDVRSASEGIYPIEDKNNPFSIFKRPFLFIGKRK.

The next 3 helical transmembrane spans lie at 3–23 (VGFL…IFLA), 44–64 (FIAP…IGQV), and 71–91 (PICY…GMEL).

Belongs to the UPF0316 family.

It is found in the cell membrane. In Methanospirillum hungatei JF-1 (strain ATCC 27890 / DSM 864 / NBRC 100397 / JF-1), this protein is UPF0316 protein Mhun_0543.